Consider the following 436-residue polypeptide: Retinoic acid receptor RXR (436 aa).

The segment at 1–108 is disordered; the sequence is MDRSEGMDTL…GPSPSPGLPH (108 aa). A modulating region spans residues 1 to 116; the sequence is MDRSEGMDTL…PHSSLHTKHI (116 aa). Residues 13 to 22 are compositionally biased toward low complexity; it reads SMPSGMSMGM. 2 stretches are compositionally biased toward polar residues: residues 40–49 and 62–76; these read SSLTSPTSTH and MASS…QQMH. Residues 85-98 show a composition bias toward low complexity; the sequence is SSMGSPPMLCLSPS. 2 consecutive NR C4-type zinc fingers follow at residues 117–137 and 153–172; these read CAIC…CEGC and CRDD…CQYC. The segment at residues 117–182 is a DNA-binding region (nuclear receptor); sequence CAICGDRASG…RYMKCLSMGM (66 aa). Positions 183–206 are hinge; the sequence is KREAVQEERQRVKEKGDGEVESTS. Basic and acidic residues predominate over residues 189 to 200; sequence EERQRVKEKGDG. The segment at 189–209 is disordered; the sequence is EERQRVKEKGDGEVESTSGAN. An NR LBD domain is found at 209–432; it reads NNDMPVEQIL…TFLMEMLENP (224 aa). Residues R290 and A301 each contribute to the 9-cis-retinoate site.

Belongs to the nuclear hormone receptor family. NR2 subfamily. Homodimer (via ligand-binding domain). Heterodimer. Homotetramer consisting of 2 canonical homodimers. Within the tetramer, each monomer binds one molecule of 9C-RA and a NCOA1-derived peptide containing an L-X(2)-L-L motif.

It localises to the nucleus. Ligand-dependent transcription factor probably involved in the retinoic acid response pathway. Binds 9-cis-retinoic acid (9C-RA) and, to a lesser extent, docosahexaenoic acid (DHA), phytanic acid, methoprene acid and oleic acid. Binds to double-stranded DNA sequences containing direct repeats (DR) with the consensus sequence 5'-[AG]GGTCA-3' and 1, 2, 3, 4 or 5 nucleotides in between (DR1, DR2, DR3. DR4 and DR5, respectively). Binding to DR1 is strongest. Transactivates gene expression when 9C-RA or DHA is bound. The sequence is that of Retinoic acid receptor RXR from Biomphalaria glabrata (Bloodfluke planorb).